The sequence spans 81 residues: Photosystem I iron-sulfur center (81 aa).

4Fe-4S ferredoxin-type domains are found at residues 2–31 and 39–68; these read SHSVKIYDTCIGCTQCVRACPTDVLEMVPW and IASAPRTEDCVGCKRCESACPTDFLSVRVY. Positions 11, 14, 17, 21, 48, 51, 54, and 58 each coordinate [4Fe-4S] cluster.

In terms of assembly, the eukaryotic PSI reaction center is composed of at least 11 subunits. [4Fe-4S] cluster is required as a cofactor.

The protein resides in the plastid. It is found in the chloroplast thylakoid membrane. It catalyses the reaction reduced [plastocyanin] + hnu + oxidized [2Fe-2S]-[ferredoxin] = oxidized [plastocyanin] + reduced [2Fe-2S]-[ferredoxin]. In terms of biological role, apoprotein for the two 4Fe-4S centers FA and FB of photosystem I (PSI); essential for photochemical activity. FB is the terminal electron acceptor of PSI, donating electrons to ferredoxin. The C-terminus interacts with PsaA/B/D and helps assemble the protein into the PSI complex. Required for binding of PsaD and PsaE to PSI. PSI is a plastocyanin/cytochrome c6-ferredoxin oxidoreductase, converting photonic excitation into a charge separation, which transfers an electron from the donor P700 chlorophyll pair to the spectroscopically characterized acceptors A0, A1, FX, FA and FB in turn. In Pleurastrum terricola (Filamentous green alga), this protein is Photosystem I iron-sulfur center.